The primary structure comprises 339 residues: DNA-directed RNA polymerase subunit alpha (339 aa).

The segment at 1-233 (MVREEVAGST…DLFLPFLHAE (233 aa)) is alpha N-terminal domain (alpha-NTD). Residues 264–339 (KKGIPLNCIF…IDLLKNKLSF (76 aa)) are alpha C-terminal domain (alpha-CTD).

The protein belongs to the RNA polymerase alpha chain family. In plastids the minimal PEP RNA polymerase catalytic core is composed of four subunits: alpha, beta, beta', and beta''. When a (nuclear-encoded) sigma factor is associated with the core the holoenzyme is formed, which can initiate transcription.

It is found in the plastid. Its subcellular location is the chloroplast. The catalysed reaction is RNA(n) + a ribonucleoside 5'-triphosphate = RNA(n+1) + diphosphate. Functionally, DNA-dependent RNA polymerase catalyzes the transcription of DNA into RNA using the four ribonucleoside triphosphates as substrates. The polypeptide is DNA-directed RNA polymerase subunit alpha (Crithopsis delileana).